The sequence spans 392 residues: tRNA-specific 2-thiouridylase MnmA (392 aa).

ATP contacts are provided by residues 18-25 (GMSGGVDS) and methionine 44. Residues 104-106 (NPD) are interaction with target base in tRNA. Cysteine 109 functions as the Nucleophile in the catalytic mechanism. Residues cysteine 109 and cysteine 208 are joined by a disulfide bond. Position 133 (glycine 133) interacts with ATP. The tract at residues 158–160 (KDQ) is interaction with tRNA. Residue cysteine 208 is the Cysteine persulfide intermediate of the active site. The tract at residues 320–321 (RY) is interaction with tRNA.

Belongs to the MnmA/TRMU family.

It localises to the cytoplasm. It catalyses the reaction S-sulfanyl-L-cysteinyl-[protein] + uridine(34) in tRNA + AH2 + ATP = 2-thiouridine(34) in tRNA + L-cysteinyl-[protein] + A + AMP + diphosphate + H(+). Functionally, catalyzes the 2-thiolation of uridine at the wobble position (U34) of tRNA, leading to the formation of s(2)U34. This chain is tRNA-specific 2-thiouridylase MnmA, found in Marinobacter nauticus (strain ATCC 700491 / DSM 11845 / VT8) (Marinobacter aquaeolei).